A 162-amino-acid chain; its full sequence is NADH-quinone oxidoreductase subunit I (162 aa).

2 consecutive 4Fe-4S ferredoxin-type domains span residues 52 to 82 (LRRY…IEAG) and 93 to 122 (TRYD…EGPN). Residues cysteine 62, cysteine 65, cysteine 68, cysteine 72, cysteine 102, cysteine 105, cysteine 108, and cysteine 112 each contribute to the [4Fe-4S] cluster site.

Belongs to the complex I 23 kDa subunit family. As to quaternary structure, NDH-1 is composed of 14 different subunits. Subunits NuoA, H, J, K, L, M, N constitute the membrane sector of the complex. Requires [4Fe-4S] cluster as cofactor.

It is found in the cell inner membrane. The catalysed reaction is a quinone + NADH + 5 H(+)(in) = a quinol + NAD(+) + 4 H(+)(out). In terms of biological role, NDH-1 shuttles electrons from NADH, via FMN and iron-sulfur (Fe-S) centers, to quinones in the respiratory chain. The immediate electron acceptor for the enzyme in this species is believed to be ubiquinone. Couples the redox reaction to proton translocation (for every two electrons transferred, four hydrogen ions are translocated across the cytoplasmic membrane), and thus conserves the redox energy in a proton gradient. This is NADH-quinone oxidoreductase subunit I from Methylobacterium radiotolerans (strain ATCC 27329 / DSM 1819 / JCM 2831 / NBRC 15690 / NCIMB 10815 / 0-1).